A 114-amino-acid polypeptide reads, in one-letter code: NLP effector protein 1 (114 aa).

It belongs to the Necrosis inducing protein (NPP1) family.

It is found in the secreted. Its subcellular location is the host cytoplasm. Probable secreted effector that may act as a pathogen-associated molecular pattern (PAMP) recognized by the plant immune system. Seems not to induce necrosis, neither in several susceptible or resistant Vitis species nor in the dicot model plant Nicotiana benthamiana. The sequence is that of NLP effector protein 1 from Plasmopara viticola (Downy mildew of grapevine).